A 98-amino-acid chain; its full sequence is Cysteine-rich and transmembrane domain-containing protein WIH2 (98 aa).

The disordered stretch occupies residues 1-77 (MSQYNQPPVG…PPQHQQQQSS (77 aa)). Residues 9 to 21 (VGVPPPQGYPPEG) are compositionally biased toward pro residues. Residues 37–55 (YPQQGYPPQGYPQQGYPQQ) are compositionally biased toward low complexity. The span at 56 to 70 (GYPPPYAPQYPPPPQ) shows a compositional bias: pro residues. The chain crosses the membrane as a helical span at residues 75–92 (QSSPGFLEGCLAALCCCC).

It belongs to the CYSTM1 family. Expressed in floral organ primordia.

The protein resides in the membrane. Functionally, required for the promotion of megasporogenesis, or promotion of germ cell formation from somatic precursor cells. Acts redundantly with WIH1. Functions in a genetic pathway downstream of SPL/NZZ and WUS and together with TRN2 in promoting megasporogenesis. In Arabidopsis thaliana (Mouse-ear cress), this protein is Cysteine-rich and transmembrane domain-containing protein WIH2.